A 434-amino-acid polypeptide reads, in one-letter code: MSFNTIIDWNSCTAEQQRQLLMRPAISASESITRTVNDILDNVKTRGDEALREYSAKFDKTTVTALKVSADEIAAASERLSDELKQAMAVAVKSIETFHTAQKLPPVDVETQLGVRCQQVTRPVASVGLYIPGGSAPLFSTVLMLATPARIAGCKKVVLCSPPPIADEILYAAQLCDVQDVFNVGGAQAIAALAFGTESVPKVDKIFGPGNAFVTEAKRQVSQRLDGAAIDMPAGPSEVLVIADSGATPDFVASDLLSQAEHGPDSQVILLTPDADMARRVAEAVERQLAELPRAETTRQALNASRLIVTKDLAQCVEISNQYGPEHLIIQTRNARELVDGITSAGSVFLGDWSPESAGDYASGTNHVLPTYGYTATCSSLGLADFQKRMTVQELSKEGFSALASTIETLAAAERLTAHKNAVTLRVNVLKEQA.

Residues Tyr-130, Gln-188, and Asn-211 each coordinate NAD(+). Substrate is bound by residues Ser-237, Gln-259, and His-262. The Zn(2+) site is built by Gln-259 and His-262. Active-site proton acceptor residues include Glu-326 and His-327. Residues His-327, Asp-360, Glu-414, and His-419 each contribute to the substrate site. Asp-360 contributes to the Zn(2+) binding site. Residue His-419 coordinates Zn(2+).

It belongs to the histidinol dehydrogenase family. Homodimer. Requires Zn(2+) as cofactor.

It catalyses the reaction L-histidinol + 2 NAD(+) + H2O = L-histidine + 2 NADH + 3 H(+). It participates in amino-acid biosynthesis; L-histidine biosynthesis; L-histidine from 5-phospho-alpha-D-ribose 1-diphosphate: step 9/9. In terms of biological role, catalyzes the sequential NAD-dependent oxidations of L-histidinol to L-histidinaldehyde and then to L-histidine. This Shigella flexneri protein is Histidinol dehydrogenase.